The sequence spans 218 residues: Probable carboxylesterase clz11 (218 aa).

The Involved in the stabilization of the negatively charged intermediate by the formation of the oxyanion hole motif lies at 7–9; the sequence is LVG. The active site involves Ser77.

The protein belongs to the 'GDXG' lipolytic enzyme family.

It catalyses the reaction a carboxylic ester + H2O = an alcohol + a carboxylate + H(+). It functions in the pathway secondary metabolite biosynthesis. Functionally, probable carboxylesterase; part of the gene cluster that mediates the biosynthesis of squalestatin S1 (SQS1, also known as zaragozic acid A), a heavily oxidized fungal polyketide that offers potent cholesterol lowering activity by targeting squalene synthase (SS). SQS1 is composed of a 2,8-dioxobicyclic[3.2.1]octane-3,4,5-tricarboxyclic acid core that is connected to two lipophilic polyketide arms. These initial steps feature the priming of an unusual benzoic acid starter unit onto the highly reducing polyketide synthase clz14, followed by oxaloacetate extension and product release to generate a tricarboxylic acid containing product. The phenylalanine ammonia lyase (PAL) clz10 and the acyl-CoA ligase clz12 are involved in transforming phenylalanine into benzoyl-CoA. The citrate synthase-like protein clz17 is involved in connecting the C-alpha-carbons of the hexaketide chain and oxaloacetate to afford the tricarboxylic acid unit. The potential hydrolytic enzymes, clz11 and clz13, are in close proximity to pks2 and may participate in product release. On the other side, the tetraketide arm is synthesized by a the squalestatin tetraketide synthase clz2 and enzymatically esterified to the core in the last biosynthetic step, by the acetyltransferase clz6. The biosynthesis of the tetraketide must involve 3 rounds of chain extension. After the first and second rounds methyl-transfer occurs, and in all rounds of extension the ketoreductase and dehydratase are active. The enoyl reductase and C-MeT of clz2 are not active in the final round of extension. The acetyltransferase clz6 appears to have a broad substrate selectivity for its acyl CoA substrate, allowing the in vitro synthesis of novel squalestatins. The biosynthesis of SQS1 requires several oxidative steps likely performed by oxidoreductases clz3, clz15 and clz16. Finally, in support of the identification of the cluster as being responsible for SQS1 production, the cluster contains a gene encoding a putative squalene synthase (SS) clz20, suggesting a likely mechanism for self-resistance. The sequence is that of Probable carboxylesterase clz11 from Cochliobolus lunatus (Filamentous fungus).